A 271-amino-acid polypeptide reads, in one-letter code: Neurexophilin-1 (271 aa).

A signal peptide spans 1–21; that stretch reads MQAACWYVLLLLQPTVYLVTC. The interval 22–97 is II; the sequence is ANLTNGGKSE…WDWLRNSTDL (76 aa). Residues N23, N68, N93, N146, N156, and N162 are each glycosylated (N-linked (GlcNAc...) asparagine). Residues 98 to 176 are III; sequence QEPRPRAKRR…LVPPTKIVEF (79 aa). The IV (linker domain) stretch occupies residues 177–185; the sequence is DLAQQTVID. The segment at 186–271 is v (Cys-rich); that stretch reads AKDSKSFNCR…HSDTPYFPSG (86 aa).

This sequence belongs to the neurexophilin family. In terms of processing, may be proteolytically processed at the boundary between the N-terminal non-conserved and the central conserved domain in neuron-like cells. In terms of tissue distribution, highest level in brain.

The protein localises to the secreted. Its function is as follows. May be signaling molecules that resemble neuropeptides. Ligand for alpha-neurexins. In Rattus norvegicus (Rat), this protein is Neurexophilin-1 (Nxph1).